A 448-amino-acid polypeptide reads, in one-letter code: Probable glycine dehydrogenase (decarboxylating) subunit 1 (448 aa).

It belongs to the GcvP family. N-terminal subunit subfamily. In terms of assembly, the glycine cleavage system is composed of four proteins: P, T, L and H. In this organism, the P 'protein' is a heterodimer of two subunits.

The catalysed reaction is N(6)-[(R)-lipoyl]-L-lysyl-[glycine-cleavage complex H protein] + glycine + H(+) = N(6)-[(R)-S(8)-aminomethyldihydrolipoyl]-L-lysyl-[glycine-cleavage complex H protein] + CO2. Its function is as follows. The glycine cleavage system catalyzes the degradation of glycine. The P protein binds the alpha-amino group of glycine through its pyridoxal phosphate cofactor; CO(2) is released and the remaining methylamine moiety is then transferred to the lipoamide cofactor of the H protein. The sequence is that of Probable glycine dehydrogenase (decarboxylating) subunit 1 from Staphylococcus aureus (strain COL).